A 442-amino-acid polypeptide reads, in one-letter code: Trigger factor (442 aa).

One can recognise a PPIase FKBP-type domain in the interval 165–250; the sequence is DDTAQIDFEG…LHKILQKELP (86 aa).

Belongs to the FKBP-type PPIase family. Tig subfamily.

The protein resides in the cytoplasm. It carries out the reaction [protein]-peptidylproline (omega=180) = [protein]-peptidylproline (omega=0). Involved in protein export. Acts as a chaperone by maintaining the newly synthesized protein in an open conformation. Functions as a peptidyl-prolyl cis-trans isomerase. In Helicobacter hepaticus (strain ATCC 51449 / 3B1), this protein is Trigger factor.